Reading from the N-terminus, the 359-residue chain is Peptide chain release factor 1 (359 aa).

The residue at position 236 (Q236) is an N5-methylglutamine. The segment at 288–307 (QDEQDAERKSTIGTGDRSER) is disordered. The segment covering 293–307 (AERKSTIGTGDRSER) has biased composition (basic and acidic residues).

This sequence belongs to the prokaryotic/mitochondrial release factor family. Methylated by PrmC. Methylation increases the termination efficiency of RF1.

It localises to the cytoplasm. Its function is as follows. Peptide chain release factor 1 directs the termination of translation in response to the peptide chain termination codons UAG and UAA. This is Peptide chain release factor 1 from Streptococcus sanguinis (strain SK36).